Consider the following 321-residue polypeptide: Serine protease 52 (321 aa).

The first 27 residues, 1–27 (MKRWKDRRTGLLLPLVLLLFGACSSLA), serve as a signal peptide directing secretion. Positions 56 to 287 (IVGGKPANIL…YVRWISKQTA (232 aa)) constitute a Peptidase S1 domain. A disulfide bond links cysteine 81 and cysteine 97. Catalysis depends on charge relay system residues histidine 96 and aspartate 142. Asparagine 153 is a glycosylation site (N-linked (GlcNAc...) asparagine). Cystine bridges form between cysteine 175-cysteine 242, cysteine 208-cysteine 221, and cysteine 232-cysteine 263. Serine 236 serves as the catalytic Charge relay system. Residues 300–320 (ACPLVLSCRAILFLYFVMFLL) traverse the membrane as a helical segment.

The protein belongs to the peptidase S1 family.

The protein localises to the membrane. Probable serine protease. The sequence is that of Serine protease 52 (Prss52) from Mus musculus (Mouse).